The sequence spans 500 residues: L-arabinose isomerase (500 aa).

Glutamate 306, glutamate 333, histidine 350, and histidine 450 together coordinate Mn(2+).

This sequence belongs to the arabinose isomerase family. In terms of assembly, homohexamer. It depends on Mn(2+) as a cofactor.

The enzyme catalyses beta-L-arabinopyranose = L-ribulose. It functions in the pathway carbohydrate degradation; L-arabinose degradation via L-ribulose; D-xylulose 5-phosphate from L-arabinose (bacterial route): step 1/3. In terms of biological role, catalyzes the conversion of L-arabinose to L-ribulose. The sequence is that of L-arabinose isomerase from Yersinia enterocolitica serotype O:8 / biotype 1B (strain NCTC 13174 / 8081).